The chain runs to 98 residues: Aspartyl/glutamyl-tRNA(Asn/Gln) amidotransferase subunit C (98 aa).

Residues 77–98 form a disordered region; the sequence is NEAPNPEGDFFRVPQILNTDEE.

It belongs to the GatC family. As to quaternary structure, heterotrimer of A, B and C subunits.

It catalyses the reaction L-glutamyl-tRNA(Gln) + L-glutamine + ATP + H2O = L-glutaminyl-tRNA(Gln) + L-glutamate + ADP + phosphate + H(+). The catalysed reaction is L-aspartyl-tRNA(Asn) + L-glutamine + ATP + H2O = L-asparaginyl-tRNA(Asn) + L-glutamate + ADP + phosphate + 2 H(+). Its function is as follows. Allows the formation of correctly charged Asn-tRNA(Asn) or Gln-tRNA(Gln) through the transamidation of misacylated Asp-tRNA(Asn) or Glu-tRNA(Gln) in organisms which lack either or both of asparaginyl-tRNA or glutaminyl-tRNA synthetases. The reaction takes place in the presence of glutamine and ATP through an activated phospho-Asp-tRNA(Asn) or phospho-Glu-tRNA(Gln). The chain is Aspartyl/glutamyl-tRNA(Asn/Gln) amidotransferase subunit C from Crocosphaera subtropica (strain ATCC 51142 / BH68) (Cyanothece sp. (strain ATCC 51142)).